Reading from the N-terminus, the 207-residue chain is ATP synthase subunit 5, mitochondrial (207 aa).

Belongs to the ATPase delta chain family. F-type ATPases have 2 components, CF(1) - the catalytic core - and CF(0) - the membrane proton channel. CF(1) has five subunits: alpha(3), beta(3), gamma(1), delta(1), epsilon(1). CF(0) has three main subunits: a, b and c.

The protein localises to the mitochondrion. It localises to the mitochondrion inner membrane. Mitochondrial membrane ATP synthase (F(1)F(0) ATP synthase or Complex V) produces ATP from ADP in the presence of a proton gradient across the membrane which is generated by electron transport complexes of the respiratory chain. F-type ATPases consist of two structural domains, F(1) - containing the extramembraneous catalytic core and F(0) - containing the membrane proton channel, linked together by a central stalk and a peripheral stalk. During catalysis, ATP synthesis in the catalytic domain of F(1) is coupled via a rotary mechanism of the central stalk subunits to proton translocation. Part of the complex F(0) domain and the peripheric stalk, which acts as a stator to hold the catalytic alpha(3)beta(3) subcomplex and subunit a/ATP6 static relative to the rotary elements. The protein is ATP synthase subunit 5, mitochondrial (ATP5) of Eremothecium gossypii (strain ATCC 10895 / CBS 109.51 / FGSC 9923 / NRRL Y-1056) (Yeast).